Reading from the N-terminus, the 366-residue chain is Chorismate synthase (366 aa).

NADP(+) contacts are provided by R48 and R54. FMN-binding positions include 132–134 (RSS), 244–245 (NA), G289, 304–308 (KPTSS), and R330.

This sequence belongs to the chorismate synthase family. Homotetramer. It depends on FMNH2 as a cofactor.

It catalyses the reaction 5-O-(1-carboxyvinyl)-3-phosphoshikimate = chorismate + phosphate. Its pathway is metabolic intermediate biosynthesis; chorismate biosynthesis; chorismate from D-erythrose 4-phosphate and phosphoenolpyruvate: step 7/7. Functionally, catalyzes the anti-1,4-elimination of the C-3 phosphate and the C-6 proR hydrogen from 5-enolpyruvylshikimate-3-phosphate (EPSP) to yield chorismate, which is the branch point compound that serves as the starting substrate for the three terminal pathways of aromatic amino acid biosynthesis. This reaction introduces a second double bond into the aromatic ring system. The chain is Chorismate synthase from Methylorubrum extorquens (strain PA1) (Methylobacterium extorquens).